Consider the following 280-residue polypeptide: Intimin (280 aa).

Residues isoleucine 1–phenylalanine 92 enclose the Big-1 domain. Residues alanine 127–alanine 173 enclose the BIG2 domain. An intrachain disulfide couples cysteine 201 to cysteine 278.

It belongs to the intimin/invasin family.

The protein resides in the cell outer membrane. An inverse autotransporter. The sequence is that of Intimin (eaeA) from Hafnia alvei.